We begin with the raw amino-acid sequence, 116 residues long: Protein Wnt-5a (116 aa).

Residue serine 1 is the site of O-palmitoleoyl serine; by PORCN attachment. Asparagine 69 and asparagine 83 each carry an N-linked (GlcNAc...) asparagine glycan. An intrachain disulfide couples cysteine 82 to cysteine 97.

This sequence belongs to the Wnt family. In terms of processing, palmitoleoylation is required for efficient binding to frizzled receptors. Depalmitoleoylation leads to Wnt signaling pathway inhibition.

It localises to the secreted. Its subcellular location is the extracellular space. The protein localises to the extracellular matrix. Its function is as follows. Ligand for members of the frizzled family of seven transmembrane receptors. Can activate or inhibit canonical Wnt signaling, depending on receptor context. Required during embryogenesis for extension of the primary anterior-posterior axis. This is Protein Wnt-5a (WNT5A) from Anser caerulescens (Snow goose).